Reading from the N-terminus, the 278-residue chain is Protein canopy homolog 3 (278 aa).

An N-terminal signal peptide occupies residues Met-1–Leu-30. The 225-residue stretch at Ser-47 to Thr-271 folds into the Saposin B-type domain. 3 disulfide bridges follow: Cys-49–Cys-206, Cys-52–Cys-194, and Cys-104–Cys-166. Asn-153 carries N-linked (GlcNAc...) asparagine glycosylation. A coiled-coil region spans residues Asn-153–Asp-179. The tract at residues Lys-215–Leu-278 is disordered. Residues Ala-233–Ser-243 are compositionally biased toward low complexity.

It belongs to the canopy family. Interacts with HSP90B1; this interaction is disrupted in the presence of ATP. Interacts with TLR1, TLR2, TLR4 and TLR9. Strongest interaction with TLR4.

The protein localises to the endoplasmic reticulum. Functionally, toll-like receptor (TLR)-specific co-chaperone for HSP90B1. Required for proper TLR folding, except that of TLR3, and hence controls TLR exit from the endoplasmic reticulum. Consequently, required for both innate and adaptive immune responses. The sequence is that of Protein canopy homolog 3 (CNPY3) from Homo sapiens (Human).